The primary structure comprises 246 residues: Ribonuclease 3 (246 aa).

Residues 18–147 (FQELQNKIGI…FIGALYLDQG (130 aa)) form the RNase III domain. Glu-60 is a binding site for Mg(2+). Asp-64 is an active-site residue. Mg(2+) contacts are provided by Asp-133 and Glu-136. The active site involves Glu-136. One can recognise a DRBM domain in the interval 173 to 242 (DFKSQLQELV…AQMALETLRA (70 aa)).

Belongs to the ribonuclease III family. Homodimer. It depends on Mg(2+) as a cofactor.

The protein localises to the cytoplasm. The enzyme catalyses Endonucleolytic cleavage to 5'-phosphomonoester.. In terms of biological role, digests double-stranded RNA. Involved in the processing of primary rRNA transcript to yield the immediate precursors to the large and small rRNAs (23S and 16S). Processes some mRNAs, and tRNAs when they are encoded in the rRNA operon. Processes pre-crRNA and tracrRNA of type II CRISPR loci if present in the organism. This is Ribonuclease 3 from Geobacillus kaustophilus (strain HTA426).